We begin with the raw amino-acid sequence, 696 residues long: Elongation factor G (696 aa).

Residues 8 to 290 form the tr-type G domain; that stretch reads ERYRNIGISA…KVIELMPAPT (283 aa). GTP contacts are provided by residues 17–24, 88–92, and 142–145; these read AHIDAGKT, DTPGH, and NKMD.

It belongs to the TRAFAC class translation factor GTPase superfamily. Classic translation factor GTPase family. EF-G/EF-2 subfamily.

Its subcellular location is the cytoplasm. In terms of biological role, catalyzes the GTP-dependent ribosomal translocation step during translation elongation. During this step, the ribosome changes from the pre-translocational (PRE) to the post-translocational (POST) state as the newly formed A-site-bound peptidyl-tRNA and P-site-bound deacylated tRNA move to the P and E sites, respectively. Catalyzes the coordinated movement of the two tRNA molecules, the mRNA and conformational changes in the ribosome. In Thiobacillus denitrificans (strain ATCC 25259 / T1), this protein is Elongation factor G.